The sequence spans 393 residues: NAD(P)H-quinone oxidoreductase subunit H, chloroplastic (393 aa).

It belongs to the complex I 49 kDa subunit family. NDH is composed of at least 16 different subunits, 5 of which are encoded in the nucleus.

Its subcellular location is the plastid. It localises to the chloroplast thylakoid membrane. It catalyses the reaction a plastoquinone + NADH + (n+1) H(+)(in) = a plastoquinol + NAD(+) + n H(+)(out). It carries out the reaction a plastoquinone + NADPH + (n+1) H(+)(in) = a plastoquinol + NADP(+) + n H(+)(out). NDH shuttles electrons from NAD(P)H:plastoquinone, via FMN and iron-sulfur (Fe-S) centers, to quinones in the photosynthetic chain and possibly in a chloroplast respiratory chain. The immediate electron acceptor for the enzyme in this species is believed to be plastoquinone. Couples the redox reaction to proton translocation, and thus conserves the redox energy in a proton gradient. The polypeptide is NAD(P)H-quinone oxidoreductase subunit H, chloroplastic (Nuphar advena (Common spatterdock)).